The chain runs to 121 residues: UPF0102 protein Strop_1320 (121 aa).

The protein belongs to the UPF0102 family.

The chain is UPF0102 protein Strop_1320 from Salinispora tropica (strain ATCC BAA-916 / DSM 44818 / JCM 13857 / NBRC 105044 / CNB-440).